The chain runs to 319 residues: ATP-dependent 6-phosphofructokinase (319 aa).

G11 provides a ligand contact to ATP. Residue 21–25 participates in ADP binding; that stretch reads RSIAR. Residues 72-73 and 102-105 each bind ATP; these read RC and GDGS. D103 contacts Mg(2+). 125 to 127 is a substrate binding site; sequence TID. D127 functions as the Proton acceptor in the catalytic mechanism. R154 provides a ligand contact to ADP. Residues R162 and 169-171 each bind substrate; that span reads MGR. Residues 185–187, R211, and 213–215 each bind ADP; these read GAE and KLH. Residues E222, K243, and 249 to 252 contribute to the substrate site; that span reads HVQR.

It belongs to the phosphofructokinase type A (PFKA) family. ATP-dependent PFK group I subfamily. Prokaryotic clade 'B1' sub-subfamily. In terms of assembly, homotetramer. Mg(2+) is required as a cofactor.

Its subcellular location is the cytoplasm. The catalysed reaction is beta-D-fructose 6-phosphate + ATP = beta-D-fructose 1,6-bisphosphate + ADP + H(+). It functions in the pathway carbohydrate degradation; glycolysis; D-glyceraldehyde 3-phosphate and glycerone phosphate from D-glucose: step 3/4. With respect to regulation, allosterically activated by ADP and other diphosphonucleosides, and allosterically inhibited by phosphoenolpyruvate. Its function is as follows. Catalyzes the phosphorylation of D-fructose 6-phosphate to fructose 1,6-bisphosphate by ATP, the first committing step of glycolysis. The chain is ATP-dependent 6-phosphofructokinase from Finegoldia magna (strain ATCC 29328 / DSM 20472 / WAL 2508) (Peptostreptococcus magnus).